The chain runs to 157 residues: Transmembrane protein 50A (157 aa).

Ser2 carries the post-translational modification N-acetylserine. Residue Ser2 is modified to Phosphoserine. 4 consecutive transmembrane segments (helical) span residues 26 to 46 (IAAG…AVIY), 58 to 78 (ACGV…NGQV), 95 to 115 (IWLF…MWIL), and 126 to 146 (IVYP…GGLV).

The protein belongs to the UPF0220 family.

The protein resides in the membrane. This is Transmembrane protein 50A (TMEM50A) from Homo sapiens (Human).